Reading from the N-terminus, the 241-residue chain is B9 domain-containing protein 1 (241 aa).

The interval 1–42 (MSASEGISLPGNEETTPPHEKHKQKAKKAKKKSRSAKESVPN) is disordered. The segment covering 20-34 (EKHKQKAKKAKKKSR) has biased composition (basic residues). The C2 B9-type domain occupies 53-197 (FSLSIVGQIV…TSWLLRREPE (145 aa)).

The protein belongs to the B9D family. As to quaternary structure, probable component of the tectonic-like complex (also named MKS complex), composed of B9d1, B9d2, Cc2d2a, Mks1 and tctn. In terms of tissue distribution, expressed in type I sensory neurons (at protein level). Expressed in spermatids and spermatocytes (at protein level).

Its subcellular location is the cytoplasm. It is found in the cytoskeleton. The protein localises to the cilium basal body. In terms of biological role, probable component of the tectonic-like complex (also named MKS complex), a complex localized at the transition zone of primary cilia. Required for ciliary structure and function. The protein is B9 domain-containing protein 1 of Drosophila melanogaster (Fruit fly).